The primary structure comprises 165 residues: Ubiquitin-fold modifier-conjugating enzyme 1 (165 aa).

Cys116 acts as the Glycyl thioester intermediate in catalysis.

It belongs to the ubiquitin-conjugating enzyme family. UFC1 subfamily.

Functionally, E2-like enzyme which forms an intermediate with UFM1 via a thioester linkage. This Drosophila virilis (Fruit fly) protein is Ubiquitin-fold modifier-conjugating enzyme 1.